Here is a 76-residue protein sequence, read N- to C-terminus: Vasotab-TY1 (76 aa).

The first 21 residues, methionine 1–aspartate 21, serve as a signal peptide directing secretion. The Kazal-like domain maps to aspartate 22–lysine 76. 3 disulfides stabilise this stretch: cysteine 23–cysteine 60, cysteine 27–cysteine 53, and cysteine 35–cysteine 75.

As to expression, expressed by the salivary gland.

The protein localises to the secreted. Its function is as follows. Vasodilator protein that inhibits vasoconstriction of isolated rat femoral artery induced by phenylephrine. Since platelet aggregation and vasoconstriction are key hemostatic responses, particularly in small wounds, this protein likely participates in the antihemostatic responses during blood feeding. Blocks L-type calcium channels (Cav1/CACNA1) in left ventricular myocytes isolated from rat hearts. This chain is Vasotab-TY1, found in Tabanus yao (Horsefly).